A 491-amino-acid chain; its full sequence is MAGQGLPLHVATLLTGLLECLGFAGVLFGWPSLVFVFKNEDYFKDLCGPDAGPIGNATGQADCKAQDERFSLIFTLGSFMNNFMTFPTGYIFDRFKTTVARLIAIFFYTTATLIIAFTSAGSAVLLFLAMPMLTIGGILFLITNLQIGNLFGQHRSTIITLYNGAFDSSSAVFLIIKLLYEKGISLRASFIFISVCSTWHVARTFLLMPRGHIPYPLPPNYSYGLCPGNGTTKEEKETAEHENRELQSKEFLSAKEETPGAGQKQELRSFWSYAFSRRFAWHLVWLSVIQLWHYLFIGTLNSLLTNMAGGDMARVSTYTNAFAFTQFGVLCAPWNGLLMDRLKQKYQKEARKTGSSTLAVALCSTVPSLALTSLLCLGFALCASVPILPLQYLTFILQVISRSFLYGSNAAFLTLAFPSEHFGKLFGLVMALSAVVSLLQFPIFTLIKGSLQNDPFYVNVMFMLAILLTFFHPFLVYRECRTWKESPSAIA.

Residues 17–37 traverse the membrane as a helical segment; that stretch reads LLECLGFAGVLFGWPSLVFVF. N-linked (GlcNAc...) asparagine glycosylation occurs at Asn56. The next 5 helical transmembrane spans lie at 72–92, 102–122, 123–143, 156–176, and 188–208; these read LIFT…GYIF, LIAI…SAGS, AVLL…FLIT, STII…FLII, and ASFI…FLLM. Asn220 and Asn229 each carry an N-linked (GlcNAc...) asparagine glycan. Position 253 is a phosphoserine (Ser253). A Phosphothreonine modification is found at Thr258. The next 6 membrane-spanning stretches (helical) occupy residues 279-299, 319-339, 356-376, 396-418, 427-447, and 456-476; these read FAWH…FIGT, TNAF…GLLM, STLA…SLLC, ILQV…LAFP, GLVM…FTLI, and FYVN…PFLV.

It belongs to the SLC43A transporter (TC 2.A.1.44) family. In terms of tissue distribution, widely expressed with highest levels in the liver and lung, followed by the pancreas. Highly expressed in macrophages.

Its subcellular location is the basolateral cell membrane. The enzyme catalyses adenine(out) = adenine(in). It carries out the reaction guanine(out) = guanine(in). The catalysed reaction is hypoxanthine(out) = hypoxanthine(in). Its activity is regulated as follows. Adenine transport is strongly inhibited by decynium-22. 6-mercaptopurine-transport is inhibited by 6-thioguanine, 6-methylmercaptopurine and decynium-22. Functionally, sodium-independent purine-selective nucleobase transporter which mediates the equilibrative transport of extracellular purine nucleobases such as adenine, guanine and hypoxanthine. May regulate fatty acid (FA) transport in adipocytes, acting as a positive regulator of FA efflux and as a negative regulator of FA uptake. In terms of biological role, sodium-independent purine-selective nucleobase transporter which mediates the equilibrative transport of extracellular purine nucleobase adenine. Mediates the influx and efflux of the purine nucleobase analog drug 6-mercaptopurine across the membrane. This is Equilibrative nucleobase transporter 1 (SLC43A3) from Homo sapiens (Human).